The following is a 589-amino-acid chain: ATP-dependent lipid A-core flippase (589 aa).

Helical transmembrane passes span 29–49 (LLLV…TGFL), 70–90 (WLPV…YITD), 157–177 (VIGA…TILV), 261–281 (MIGA…ALAG), and 283–303 (LTAG…PGLK). The ABC transmembrane type-1 domain occupies 32 to 314 (VAALIAALIE…LTNVQNMVQR (283 aa)). An ABC transporter domain is found at 346–582 (IEFRDVTARY…GGLYSHLHGM (237 aa)). Residue 380–387 (GRSGSGKS) coordinates ATP.

It belongs to the ABC transporter superfamily. Lipid exporter (TC 3.A.1.106) family. In terms of assembly, homodimer.

It is found in the cell inner membrane. It carries out the reaction ATP + H2O + lipid A-core oligosaccharideSide 1 = ADP + phosphate + lipid A-core oligosaccharideSide 2.. Its function is as follows. Involved in lipopolysaccharide (LPS) biosynthesis. Translocates lipid A-core from the inner to the outer leaflet of the inner membrane. Transmembrane domains (TMD) form a pore in the inner membrane and the ATP-binding domain (NBD) is responsible for energy generation. This Xanthomonas euvesicatoria pv. vesicatoria (strain 85-10) (Xanthomonas campestris pv. vesicatoria) protein is ATP-dependent lipid A-core flippase.